The chain runs to 103 residues: UPF0145 protein BC_1816 (103 aa).

This sequence belongs to the UPF0145 family.

In Bacillus cereus (strain ATCC 14579 / DSM 31 / CCUG 7414 / JCM 2152 / NBRC 15305 / NCIMB 9373 / NCTC 2599 / NRRL B-3711), this protein is UPF0145 protein BC_1816.